The following is a 289-amino-acid chain: 3-methyl-2-oxobutanoate hydroxymethyltransferase (289 aa).

Polar residues predominate over residues 1 to 15 (MSTTFQLDTSTSRAN). Residues 1-20 (MSTTFQLDTSTSRANPTPAP) are disordered. Positions 67 and 106 each coordinate Mg(2+). 3-methyl-2-oxobutanoate-binding positions include 67-68 (DS), aspartate 106, and lysine 136. Residue glutamate 138 coordinates Mg(2+). Glutamate 205 (proton acceptor) is an active-site residue.

Belongs to the PanB family. As to quaternary structure, homodecamer; pentamer of dimers. Mg(2+) serves as cofactor.

It localises to the cytoplasm. The catalysed reaction is 3-methyl-2-oxobutanoate + (6R)-5,10-methylene-5,6,7,8-tetrahydrofolate + H2O = 2-dehydropantoate + (6S)-5,6,7,8-tetrahydrofolate. The protein operates within cofactor biosynthesis; (R)-pantothenate biosynthesis; (R)-pantoate from 3-methyl-2-oxobutanoate: step 1/2. Catalyzes the reversible reaction in which hydroxymethyl group from 5,10-methylenetetrahydrofolate is transferred onto alpha-ketoisovalerate to form ketopantoate. In Novosphingobium aromaticivorans (strain ATCC 700278 / DSM 12444 / CCUG 56034 / CIP 105152 / NBRC 16084 / F199), this protein is 3-methyl-2-oxobutanoate hydroxymethyltransferase.